The primary structure comprises 457 residues: Argininosuccinate lyase (457 aa).

This sequence belongs to the lyase 1 family. Argininosuccinate lyase subfamily.

The protein resides in the cytoplasm. The enzyme catalyses 2-(N(omega)-L-arginino)succinate = fumarate + L-arginine. Its pathway is amino-acid biosynthesis; L-arginine biosynthesis; L-arginine from L-ornithine and carbamoyl phosphate: step 3/3. The protein is Argininosuccinate lyase of Aquifex aeolicus (strain VF5).